Here is a 472-residue protein sequence, read N- to C-terminus: ATP-dependent rRNA helicase rrp3 (472 aa).

The disordered stretch occupies residues 1 to 51 (MPDVKKRKIAHEAPEHGSDAESTSSHESVAQQDDTAETQDEAAATETRPAP). A compositionally biased stretch (basic and acidic residues) spans 10-19 (AHEAPEHGSD). A compositionally biased stretch (polar residues) spans 20-29 (AESTSSHESV). The Q motif motif lies at 52-80 (KSFKDLGIIDQLCEACETMGYKAPTPIQA). Positions 83–254 (IPLALQGRDL…RASLSNPLRV (172 aa)) constitute a Helicase ATP-binding domain. Residue 96 to 103 (AETGSGKT) participates in ATP binding. The DEAD box signature appears at 202–205 (DEAD). Residues 282 to 426 (YLVYLLNEFV…EYELEKDEVM (145 aa)) enclose the Helicase C-terminal domain. The tract at residues 451-472 (GTKAKKFGKGKRSRDEMDQEEG) is disordered. Residues 452–462 (TKAKKFGKGKR) are compositionally biased toward basic residues.

This sequence belongs to the DEAD box helicase family. DDX47/RRP3 subfamily. As to quaternary structure, interacts with the SSU processome.

It localises to the nucleus. The enzyme catalyses ATP + H2O = ADP + phosphate + H(+). In terms of biological role, ATP-dependent rRNA helicase required for pre-ribosomal RNA processing. Involved in the maturation of the 35S-pre-rRNA and to its cleavage to mature 18S rRNA. The sequence is that of ATP-dependent rRNA helicase rrp3 from Neosartorya fischeri (strain ATCC 1020 / DSM 3700 / CBS 544.65 / FGSC A1164 / JCM 1740 / NRRL 181 / WB 181) (Aspergillus fischerianus).